Reading from the N-terminus, the 20-residue chain is Brevinin-1LT (20 aa).

An intrachain disulfide couples Cys-14 to Cys-20.

In terms of tissue distribution, expressed by the skin glands.

It localises to the secreted. In terms of biological role, antimicrobial peptide. In Rana latastei (Italian agile frog), this protein is Brevinin-1LT.